Reading from the N-terminus, the 248-residue chain is Acetylglutamate kinase (248 aa).

Substrate contacts are provided by residues G41–G42, R63, and N155.

The protein belongs to the acetylglutamate kinase family. ArgB subfamily.

The protein resides in the cytoplasm. The catalysed reaction is N-acetyl-L-glutamate + ATP = N-acetyl-L-glutamyl 5-phosphate + ADP. It functions in the pathway amino-acid biosynthesis; L-arginine biosynthesis; N(2)-acetyl-L-ornithine from L-glutamate: step 2/4. Catalyzes the ATP-dependent phosphorylation of N-acetyl-L-glutamate. This Lactiplantibacillus plantarum (strain ATCC BAA-793 / NCIMB 8826 / WCFS1) (Lactobacillus plantarum) protein is Acetylglutamate kinase.